The chain runs to 293 residues: Ribosomal protein L11 methyltransferase (293 aa).

S-adenosyl-L-methionine-binding residues include threonine 145, glycine 166, aspartate 188, and asparagine 230.

It belongs to the methyltransferase superfamily. PrmA family.

It localises to the cytoplasm. The catalysed reaction is L-lysyl-[protein] + 3 S-adenosyl-L-methionine = N(6),N(6),N(6)-trimethyl-L-lysyl-[protein] + 3 S-adenosyl-L-homocysteine + 3 H(+). Functionally, methylates ribosomal protein L11. The sequence is that of Ribosomal protein L11 methyltransferase from Shewanella putrefaciens (strain CN-32 / ATCC BAA-453).